The chain runs to 579 residues: UPF0329 protein ECU06_1620 (579 aa).

2 disordered regions span residues 325-360 and 370-389; these read EEKA…GEEA and ARRK…KIHK. Residues 329 to 338 show a composition bias toward basic residues; that stretch reads KGRKDGKKKS. The span at 345 to 360 shows a compositional bias: acidic residues; sequence KEEESETEEVEAGEEA.

It belongs to the UPF0329 family.

In Encephalitozoon cuniculi (strain GB-M1) (Microsporidian parasite), this protein is UPF0329 protein ECU06_1620.